Here is a 413-residue protein sequence, read N- to C-terminus: Arginine biosynthesis bifunctional protein ArgJ (413 aa).

Positions 160, 186, 197, 284, 408, and 413 each coordinate substrate. Residue threonine 197 is the Nucleophile of the active site.

This sequence belongs to the ArgJ family. Heterotetramer of two alpha and two beta chains.

The protein resides in the cytoplasm. The enzyme catalyses N(2)-acetyl-L-ornithine + L-glutamate = N-acetyl-L-glutamate + L-ornithine. It catalyses the reaction L-glutamate + acetyl-CoA = N-acetyl-L-glutamate + CoA + H(+). It functions in the pathway amino-acid biosynthesis; L-arginine biosynthesis; L-ornithine and N-acetyl-L-glutamate from L-glutamate and N(2)-acetyl-L-ornithine (cyclic): step 1/1. Its pathway is amino-acid biosynthesis; L-arginine biosynthesis; N(2)-acetyl-L-ornithine from L-glutamate: step 1/4. In terms of biological role, catalyzes two activities which are involved in the cyclic version of arginine biosynthesis: the synthesis of N-acetylglutamate from glutamate and acetyl-CoA as the acetyl donor, and of ornithine by transacetylation between N(2)-acetylornithine and glutamate. This chain is Arginine biosynthesis bifunctional protein ArgJ, found in Burkholderia pseudomallei (strain 1710b).